We begin with the raw amino-acid sequence, 329 residues long: Major outer membrane protein P.IB (329 aa).

An N-terminal signal peptide occupies residues 1 to 19; it reads MKKSLIALTLAALPVAAMA.

Belongs to the Gram-negative porin family. In terms of assembly, homotrimer.

It is found in the cell outer membrane. Serves as a slightly cation selective porin. The sequence is that of Major outer membrane protein P.IB (porB) from Neisseria meningitidis serogroup A / serotype 4A (strain DSM 15465 / Z2491).